A 289-amino-acid chain; its full sequence is 4-diphosphocytidyl-2-C-methyl-D-erythritol kinase (289 aa).

Lysine 11 is a catalytic residue. 93–103 is an ATP binding site; it reads PLAAGLAGGSA. Aspartate 135 is a catalytic residue.

This sequence belongs to the GHMP kinase family. IspE subfamily.

The catalysed reaction is 4-CDP-2-C-methyl-D-erythritol + ATP = 4-CDP-2-C-methyl-D-erythritol 2-phosphate + ADP + H(+). The protein operates within isoprenoid biosynthesis; isopentenyl diphosphate biosynthesis via DXP pathway; isopentenyl diphosphate from 1-deoxy-D-xylulose 5-phosphate: step 3/6. Catalyzes the phosphorylation of the position 2 hydroxy group of 4-diphosphocytidyl-2C-methyl-D-erythritol. In Thermoanaerobacter pseudethanolicus (strain ATCC 33223 / 39E) (Clostridium thermohydrosulfuricum), this protein is 4-diphosphocytidyl-2-C-methyl-D-erythritol kinase.